The primary structure comprises 238 residues: Nicotinamide/nicotinic acid mononucleotide adenylyltransferase (238 aa).

The NAD(+) site is built by S29 and F30. Residues H37 and K70 each contribute to the ATP site. Residues T107, G136, D138, W149, R168, and N199 each contribute to the NAD(+) site. 204-205 provides a ligand contact to ATP; the sequence is SR.

The protein belongs to the eukaryotic NMN adenylyltransferase family. Requires a divalent metal cation as cofactor.

The protein localises to the nucleus. It carries out the reaction beta-nicotinamide D-ribonucleotide + ATP + H(+) = diphosphate + NAD(+). The catalysed reaction is nicotinate beta-D-ribonucleotide + ATP + H(+) = deamido-NAD(+) + diphosphate. Its pathway is cofactor biosynthesis; NAD(+) biosynthesis; deamido-NAD(+) from nicotinate D-ribonucleotide: step 1/1. The protein operates within cofactor biosynthesis; NAD(+) biosynthesis; NAD(+) from nicotinamide D-ribonucleotide: step 1/1. Its function is as follows. Catalyzes the formation of NAD(+) from nicotinamide mononucleotide (NMN) and ATP. Can also use the deamidated form; nicotinic acid mononucleotide (NaMN) as substrate. This Arabidopsis thaliana (Mouse-ear cress) protein is Nicotinamide/nicotinic acid mononucleotide adenylyltransferase (NMNAT).